We begin with the raw amino-acid sequence, 218 residues long: Pyridoxine/pyridoxamine 5'-phosphate oxidase (218 aa).

Residues 12-15 (RLSY) and Arg70 contribute to the substrate site. FMN-binding positions include 65 to 70 (RTVLLR), 80 to 81 (YT), Lys87, and Gln109. Substrate is bound by residues Tyr127, Arg131, and Ser135. FMN-binding positions include 145–146 (QS) and Trp191. Substrate is bound at residue 197 to 199 (RLH). Residue Arg201 participates in FMN binding.

Belongs to the pyridoxamine 5'-phosphate oxidase family. Homodimer. FMN serves as cofactor.

It catalyses the reaction pyridoxamine 5'-phosphate + O2 + H2O = pyridoxal 5'-phosphate + H2O2 + NH4(+). The enzyme catalyses pyridoxine 5'-phosphate + O2 = pyridoxal 5'-phosphate + H2O2. It functions in the pathway cofactor metabolism; pyridoxal 5'-phosphate salvage; pyridoxal 5'-phosphate from pyridoxamine 5'-phosphate: step 1/1. Its pathway is cofactor metabolism; pyridoxal 5'-phosphate salvage; pyridoxal 5'-phosphate from pyridoxine 5'-phosphate: step 1/1. Functionally, catalyzes the oxidation of either pyridoxine 5'-phosphate (PNP) or pyridoxamine 5'-phosphate (PMP) into pyridoxal 5'-phosphate (PLP). This chain is Pyridoxine/pyridoxamine 5'-phosphate oxidase, found in Acinetobacter baumannii (strain SDF).